Reading from the N-terminus, the 210-residue chain is Synaptosomal-associated protein 23 (210 aa).

Met-1 carries the post-translational modification N-acetylmethionine. Ser-5, Ser-20, Ser-23, and Ser-34 each carry phosphoserine. The region spanning 14-76 (HQVTDESLES…REAEKTLTEL (63 aa)) is the t-SNARE coiled-coil homology 1 domain. The stretch at 23-76 (STRRILGLAIESQDAGIKTITMLDEQGEQLNRIEEGMDQINKDMREAEKTLTEL) forms a coiled coil. 5 S-palmitoyl cysteine lipidation sites follow: Cys-79, Cys-80, Cys-83, Cys-85, and Cys-87. Residues 104-136 (GDGGDSSPSNVVSKQPSRITNGQPQQTTGAASG) are disordered. Over residues 109 to 133 (SSPSNVVSKQPSRITNGQPQQTTGA) the composition is skewed to polar residues. Phosphoserine is present on residues Ser-110 and Ser-160. Residues 145–207 (DAREDEMEEN…DIANTRAKKL (63 aa)) form the t-SNARE coiled-coil homology 2 domain.

This sequence belongs to the SNAP-25 family. Homotetramer (via coiled-coil domain), also forms heterotetramers with STX4 and VAMP3. Found in a complex with VAMP8 and STX1A. Found in a complex with VAMP8 and STX4 in pancreas. Interacts simultaneously with SNAPIN and SYN4. Interacts with STX1A. Interacts with STX12. Interacts tightly to multiple syntaxins and synaptobrevins/VAMPs. Interacts with ZDHHC13 (via ANK repeats). Interacts with ZDHHC17 (via ANK repeats).

It localises to the cell membrane. It is found in the synapse. The protein localises to the synaptosome. Its subcellular location is the cytoplasmic vesicle membrane. Essential component of the high affinity receptor for the general membrane fusion machinery and an important regulator of transport vesicle docking and fusion. The sequence is that of Synaptosomal-associated protein 23 (Snap23) from Rattus norvegicus (Rat).